A 264-amino-acid chain; its full sequence is ELL-associated factor 2 (264 aa).

Disordered stretches follow at residues 114–154 (EGSS…PSSP) and 169–264 (MDQL…DSDD). Positions 117-142 (SKVQSRIEQQQQQIRNSSKTPNNIKN) are enriched in polar residues. Low complexity predominate over residues 173–196 (SSSDSSSDSKSSSSSSSSSENSSS). Positions 228–238 (VPDKDASHNRS) are enriched in basic and acidic residues. The span at 239–264 (QENSGHMMNTLRSDLQLSESGSDSDD) shows a compositional bias: polar residues.

The protein belongs to the EAF family.

The protein resides in the nucleus speckle. May act as a transcriptional transactivator. The polypeptide is ELL-associated factor 2 (EAF2) (Gallus gallus (Chicken)).